The following is a 70-amino-acid chain: Putative defensin-like protein 280 (70 aa).

The N-terminal stretch at 1–23 is a signal peptide; that stretch reads MASIKHFFLVFICVSVLLTSGLA. 3 disulfide bridges follow: Cys-30–Cys-53, Cys-39–Cys-65, and Cys-43–Cys-67.

The protein belongs to the DEFL family.

It is found in the secreted. This is Putative defensin-like protein 280 from Arabidopsis thaliana (Mouse-ear cress).